The following is a 298-amino-acid chain: Bifunctional protein FolD (298 aa).

NADP(+)-binding positions include 165 to 167, serine 190, and isoleucine 231; that span reads GRS.

The protein belongs to the tetrahydrofolate dehydrogenase/cyclohydrolase family. As to quaternary structure, homodimer.

It catalyses the reaction (6R)-5,10-methylene-5,6,7,8-tetrahydrofolate + NADP(+) = (6R)-5,10-methenyltetrahydrofolate + NADPH. It carries out the reaction (6R)-5,10-methenyltetrahydrofolate + H2O = (6R)-10-formyltetrahydrofolate + H(+). Its pathway is one-carbon metabolism; tetrahydrofolate interconversion. In terms of biological role, catalyzes the oxidation of 5,10-methylenetetrahydrofolate to 5,10-methenyltetrahydrofolate and then the hydrolysis of 5,10-methenyltetrahydrofolate to 10-formyltetrahydrofolate. The chain is Bifunctional protein FolD from Prochlorococcus marinus (strain MIT 9301).